Consider the following 345-residue polypeptide: Phenylalanine--tRNA ligase alpha subunit (345 aa).

Glutamate 259 provides a ligand contact to Mg(2+).

The protein belongs to the class-II aminoacyl-tRNA synthetase family. Phe-tRNA synthetase alpha subunit type 1 subfamily. In terms of assembly, tetramer of two alpha and two beta subunits. The cofactor is Mg(2+).

It localises to the cytoplasm. The catalysed reaction is tRNA(Phe) + L-phenylalanine + ATP = L-phenylalanyl-tRNA(Phe) + AMP + diphosphate + H(+). This is Phenylalanine--tRNA ligase alpha subunit from Nitrosomonas europaea (strain ATCC 19718 / CIP 103999 / KCTC 2705 / NBRC 14298).